The following is a 524-amino-acid chain: Cytokinin dehydrogenase 7 (524 aa).

Residues 58–238 (NCVKPLAVVR…TRARVLLQPA (181 aa)) form the FAD-binding PCMH-type domain. Residues alanine 91, glycine 93, asparagine 94, and glycine 95 each contribute to the FAD site. The residue at position 96 (histidine 96) is a Pros-8alpha-FAD histidine. 10 residues coordinate FAD: serine 97, glutamine 101, aspartate 162, threonine 167, serine 173, valine 177, isoleucine 228, tyrosine 479, serine 514, and glutamine 517.

The protein belongs to the oxygen-dependent FAD-linked oxidoreductase family. Requires FAD as cofactor. Expressed in the vasculature of roots, hypocotyls, cotyledons and leaves of young seedlings. In flowers, expressed in the transmitting tissue of the gynoecium prior to pollination. Expressed in the mature embryo sac with maximum activity in the egg cell and the synergids.

It localises to the cytoplasm. The protein localises to the cytosol. The enzyme catalyses N(6)-dimethylallyladenine + A + H2O = 3-methyl-2-butenal + adenine + AH2. Functionally, catalyzes the oxidation of cytokinins, a family of N(6)-substituted adenine derivatives that are plant hormones, where the substituent is an isopentenyl group. Catalyzes in vitro the oxidation of various types of cytokinin nucleotides that are known as direct products of cytokinin biosynthesis. The sequence is that of Cytokinin dehydrogenase 7 (CKX7) from Arabidopsis thaliana (Mouse-ear cress).